The primary structure comprises 1079 residues: Electrogenic sodium bicarbonate cotransporter 1 (1079 aa).

The interval 1–62 is required for interaction with AHCYL1; that stretch reads MEDEAALDRG…EKKEKERVSE (62 aa). Topologically, residues 1–466 are cytoplasmic; the sequence is MEDEAALDRG…FASDFYDALN (466 aa). At Tyr-30 the chain carries Phosphotyrosine. Residues 39–52 are compositionally biased toward basic residues; it reads YRRRRRHKRKAGHR. The disordered stretch occupies residues 39-78; sequence YRRRRRHKRKAGHREKKEKERVSENYSDKSDVENADESSS. Positions 53-70 are enriched in basic and acidic residues; sequence EKKEKERVSENYSDKSDV. Residues Ser-61, Ser-65, Ser-68, Ser-223, Ser-232, Ser-233, and Ser-245 each carry the phosphoserine modification. A disordered region spans residues 238-265; it reads FTSPENGSPAMTHRNLTSSSLNDISDKP. Phosphothreonine is present on residues Thr-249 and Thr-254. Residues 251 to 260 are compositionally biased toward polar residues; sequence RNLTSSSLND. 3 positions are modified to phosphoserine: Ser-256, Ser-257, and Ser-262. The helical transmembrane segment at 467 to 491 threads the bilayer; the sequence is IQALSAILFIYLATVTNAITFGGLL. Over 492 to 501 the chain is Extracellular; it reads GDATDNMQGV. The helical transmembrane segment at 502–520 threads the bilayer; that stretch reads LESFLGTAVSGAVFCLFAG. Position 521 (Gln-521) is a topological domain, cytoplasmic. Residues 522-542 traverse the membrane as a discontinuously helical segment; it reads PLTILSSTGPVLVFERLLFNF. Topologically, residues 543-550 are extracellular; sequence SKDHNFDY. Residues 551–571 traverse the membrane as a helical segment; sequence LEFRLWIGLWSAFLCLILVAT. Topologically, residues 572 to 585 are cytoplasmic; that stretch reads DASFLVQYFTRFTE. The chain crosses the membrane as a helical span at residues 586 to 609; it reads EGFSSLISFIFIYDAFKKMIKLAD. The Extracellular portion of the chain corresponds to 610–692; that stretch reads YYPINSNFKV…GNNCDFVPDI (83 aa). The chain crosses the membrane as a helical span at residues 693 to 710; that stretch reads TLMSFILFLGTYTSSMAL. Residues 711–725 lie on the Cytoplasmic side of the membrane; sequence KKFKTSRYFPTTARK. The helical transmembrane segment at 726–745 threads the bilayer; it reads LISDFAIILSILIFCVIDAL. The Extracellular segment spans residues 746-779; it reads VGVDTPKLIVPSEFKPTSPNRGWFVPPFGGNPWW. An interaction with CA4 region spans residues 748–779; sequence VDTPKLIVPSEFKPTSPNRGWFVPPFGGNPWW. The chain crosses the membrane as a helical span at residues 780 to 807; the sequence is VYLAAAIPALLVTILIFMDQQITAVIVN. The Cytoplasmic portion of the chain corresponds to 808 to 819; that stretch reads RKEHKLKKGAGY. The helical transmembrane segment at 820 to 836 threads the bilayer; that stretch reads HLDLFWVAILMVVCSFM. Residue Ala-837 is a topological domain, extracellular. Residues 838-855 traverse the membrane as a discontinuously helical segment; it reads LPWYVAATVISIAHIDSL. At 856–877 the chain is on the cytoplasmic side; that stretch reads KMETETSAPGEQPKFLGVREQR. Residues 878–894 traverse the membrane as a helical segment; that stretch reads VTGTLVFILTGLSVFMA. Residues 895 to 901 are Extracellular-facing; that stretch reads PILKFIP. Residues 902–918 traverse the membrane as a helical segment; sequence MPVLYGVFLYMGVASLN. Topologically, residues 919-960 are cytoplasmic; the sequence is GVQFMDRLKLLLMPLKHQPDFIYLRHVPLRRVHLFTFLQVLC. An intramembrane region (discontinuously helical) is located at residues 961–986; it reads LALLWILKSTVAAIIFPVMILALVAV. Topologically, residues 987-1079 are cytoplasmic; that stretch reads RKGMDYLFSQ…PTFLERHTSC (93 aa). The CA2-binding stretch occupies residues 1002 to 1004; that stretch reads LDD. The interval 1012–1079 is disordered; that stretch reads KKKEDEKKKK…PTFLERHTSC (68 aa). Ser-1026 carries the phosphoserine; by PKA modification. At Ser-1029 the chain carries Phosphoserine. The CA2-binding stretch occupies residues 1030–1033; it reads DSDD. Phosphoserine is present on residues Ser-1034 and Ser-1044. Positions 1057–1059 are required for basolateral targeting; the sequence is FLS. The segment covering 1062–1079 has biased composition (basic and acidic residues); sequence KPSDRERSPTFLERHTSC. At Ser-1069 the chain carries Phosphoserine.

It belongs to the anion exchanger (TC 2.A.31) family. In terms of assembly, homodimer. Interacts with CA2/carbonic anhydrase 2 and CA4/carbonic anhydrase 4 which may regulate transporter activity. Isoform 1 but not isoform 2 interacts with AHCYL1 (via PEST domain when phosphorylated); the interaction increases SLC4A4 isoform 1 activity. Interacts with AHCYL2. Phosphorylation of Ser-1026 by PKA increases the binding of CA2 and changes the Na(+):HCO3(-) stoichiometry of the transporter from 3:1 to 2:1. Phosphorylated in presence of STK39 and dephosphorylated in presence of PP1 phosphatase; phosphorylation seems to inhibit SLC4A4 activity. Post-translationally, N-glycosylated. May not be necessary for the transporter basic functions. Expressed in vas deferens epithelia (at protein level).

The protein localises to the basolateral cell membrane. It localises to the cell membrane. It carries out the reaction 2 hydrogencarbonate(out) + Na(+)(out) = 2 hydrogencarbonate(in) + Na(+)(in). It catalyses the reaction 3 hydrogencarbonate(out) + Na(+)(out) = 3 hydrogencarbonate(in) + Na(+)(in). Its function is as follows. Electrogenic sodium/bicarbonate cotransporter with a Na(+):HCO3(-) stoichiometry varying from 1:2 to 1:3. May regulate bicarbonate influx/efflux at the basolateral membrane of cells and regulate intracellular pH. The chain is Electrogenic sodium bicarbonate cotransporter 1 (SLC4A4) from Sus scrofa (Pig).